A 452-amino-acid chain; its full sequence is uncharacterized protein (452 aa).

72-79 lines the ATP pocket; the sequence is GPPGSGKT.

This sequence belongs to the AAA ATPase family. RarA/MGS1/WRNIP1 subfamily.

This is an uncharacterized protein from Mycobacterium tuberculosis (strain ATCC 25618 / H37Rv).